Consider the following 105-residue polypeptide: DNA-binding transcriptional regulator BolA (105 aa).

This sequence belongs to the BolA/IbaG family.

In terms of biological role, transcriptional regulator that plays an important role in general stress response. Has many effects on cell morphology, cell growth and cell division. Acts by regulating the transcription of many genes, including dacA (PBP-5), dacC (PBP-6), ampC and mreB. Probably involved in the coordination of genes that adapt the cell physiology in order to enhance cell adaptation and survival under stress conditions. Essential for normal cell morphology in stationary phase and under conditions of starvation. Also regulates a complex network of genes encoding proteins related to biofilm development, and negatively modulates flagellar biosynthesis and swimming capacity. Could be a motile/adhesive transcriptional switch, specifically involved in the transition between the planktonic and the attachment stage of biofilm formation. Overexpression produces round cell shape, impairs cell growth rate and induces biofilm development. The chain is DNA-binding transcriptional regulator BolA from Escherichia coli (strain K12).